The primary structure comprises 729 residues: Phosphoribosylformylglycinamidine synthase subunit PurL (729 aa).

Histidine 54 is a catalytic residue. ATP contacts are provided by tyrosine 57 and lysine 96. A Mg(2+)-binding site is contributed by glutamate 98. Residues 99-102 (SHNH) and arginine 121 each bind substrate. Histidine 100 functions as the Proton acceptor in the catalytic mechanism. Aspartate 122 is a binding site for Mg(2+). Glutamine 245 is a substrate binding site. Aspartate 273 contacts Mg(2+). 317–319 (ETQ) serves as a coordination point for substrate. 2 residues coordinate ATP: aspartate 495 and glycine 532. Asparagine 533 contacts Mg(2+). Serine 535 contributes to the substrate binding site.

The protein belongs to the FGAMS family. As to quaternary structure, monomer. Part of the FGAM synthase complex composed of 1 PurL, 1 PurQ and 2 PurS subunits.

It localises to the cytoplasm. The enzyme catalyses N(2)-formyl-N(1)-(5-phospho-beta-D-ribosyl)glycinamide + L-glutamine + ATP + H2O = 2-formamido-N(1)-(5-O-phospho-beta-D-ribosyl)acetamidine + L-glutamate + ADP + phosphate + H(+). Its pathway is purine metabolism; IMP biosynthesis via de novo pathway; 5-amino-1-(5-phospho-D-ribosyl)imidazole from N(2)-formyl-N(1)-(5-phospho-D-ribosyl)glycinamide: step 1/2. Functionally, part of the phosphoribosylformylglycinamidine synthase complex involved in the purines biosynthetic pathway. Catalyzes the ATP-dependent conversion of formylglycinamide ribonucleotide (FGAR) and glutamine to yield formylglycinamidine ribonucleotide (FGAM) and glutamate. The FGAM synthase complex is composed of three subunits. PurQ produces an ammonia molecule by converting glutamine to glutamate. PurL transfers the ammonia molecule to FGAR to form FGAM in an ATP-dependent manner. PurS interacts with PurQ and PurL and is thought to assist in the transfer of the ammonia molecule from PurQ to PurL. In Staphylococcus saprophyticus subsp. saprophyticus (strain ATCC 15305 / DSM 20229 / NCIMB 8711 / NCTC 7292 / S-41), this protein is Phosphoribosylformylglycinamidine synthase subunit PurL.